A 510-amino-acid polypeptide reads, in one-letter code: Probable mannosyl-oligosaccharide alpha-1,2-mannosidase 1B (510 aa).

A signal peptide spans 1 to 21 (MHFSSLSLPLTALSLVTPSLA). N-linked (GlcNAc...) asparagine glycosylation is found at Asn35, Asn95, Asn182, and Asn249. A disulfide bond links Cys332 and Cys361. N-linked (GlcNAc...) asparagine glycosylation occurs at Asn366. Residue Glu375 is the Proton donor of the active site. Residue Thr501 coordinates Ca(2+).

The protein belongs to the glycosyl hydrolase 47 family. As to quaternary structure, monomer. Requires Ca(2+) as cofactor. Mg(2+) is required as a cofactor.

The protein resides in the cytoplasmic vesicle lumen. The enzyme catalyses N(4)-(alpha-D-Man-(1-&gt;2)-alpha-D-Man-(1-&gt;2)-alpha-D-Man-(1-&gt;3)-[alpha-D-Man-(1-&gt;2)-alpha-D-Man-(1-&gt;3)-[alpha-D-Man-(1-&gt;2)-alpha-D-Man-(1-&gt;6)]-alpha-D-Man-(1-&gt;6)]-beta-D-Man-(1-&gt;4)-beta-D-GlcNAc-(1-&gt;4)-beta-D-GlcNAc)-L-asparaginyl-[protein] (N-glucan mannose isomer 9A1,2,3B1,2,3) + 4 H2O = N(4)-(alpha-D-Man-(1-&gt;3)-[alpha-D-Man-(1-&gt;3)-[alpha-D-Man-(1-&gt;6)]-alpha-D-Man-(1-&gt;6)]-beta-D-Man-(1-&gt;4)-beta-D-GlcNAc-(1-&gt;4)-beta-D-GlcNAc)-L-asparaginyl-[protein] (N-glucan mannose isomer 5A1,2) + 4 beta-D-mannose. It catalyses the reaction N(4)-(alpha-D-Man-(1-&gt;2)-alpha-D-Man-(1-&gt;2)-alpha-D-Man-(1-&gt;3)-[alpha-D-Man-(1-&gt;3)-[alpha-D-Man-(1-&gt;2)-alpha-D-Man-(1-&gt;6)]-alpha-D-Man-(1-&gt;6)]-beta-D-Man-(1-&gt;4)-beta-D-GlcNAc-(1-&gt;4)-beta-D-GlcNAc)-L-asparaginyl-[protein] (N-glucan mannose isomer 8A1,2,3B1,3) + 3 H2O = N(4)-(alpha-D-Man-(1-&gt;3)-[alpha-D-Man-(1-&gt;3)-[alpha-D-Man-(1-&gt;6)]-alpha-D-Man-(1-&gt;6)]-beta-D-Man-(1-&gt;4)-beta-D-GlcNAc-(1-&gt;4)-beta-D-GlcNAc)-L-asparaginyl-[protein] (N-glucan mannose isomer 5A1,2) + 3 beta-D-mannose. Its pathway is protein modification; protein glycosylation. Involved in the maturation of Asn-linked oligosaccharides. Progressively trims alpha-1,2-linked mannose residues from Man(9)GlcNAc(2) to produce Man(5)GlcNAc(2). This chain is Probable mannosyl-oligosaccharide alpha-1,2-mannosidase 1B (mns1B), found in Aspergillus flavus (strain ATCC 200026 / FGSC A1120 / IAM 13836 / NRRL 3357 / JCM 12722 / SRRC 167).